Consider the following 315-residue polypeptide: Beta-ketoacyl-[acyl-carrier-protein] synthase III 2 (315 aa).

Catalysis depends on residues Cys113 and His241. Residues 242–246 (QANLR) are ACP-binding. Asn271 is a catalytic residue.

Belongs to the thiolase-like superfamily. FabH family. In terms of assembly, homodimer.

It is found in the cytoplasm. It catalyses the reaction malonyl-[ACP] + acetyl-CoA + H(+) = 3-oxobutanoyl-[ACP] + CO2 + CoA. It participates in lipid metabolism; fatty acid biosynthesis. In terms of biological role, catalyzes the condensation reaction of fatty acid synthesis by the addition to an acyl acceptor of two carbons from malonyl-ACP. Catalyzes the first condensation reaction which initiates fatty acid synthesis and may therefore play a role in governing the total rate of fatty acid production. Possesses both acetoacetyl-ACP synthase and acetyl transacylase activities. Its substrate specificity determines the biosynthesis of branched-chain and/or straight-chain of fatty acids. The chain is Beta-ketoacyl-[acyl-carrier-protein] synthase III 2 from Streptomyces avermitilis (strain ATCC 31267 / DSM 46492 / JCM 5070 / NBRC 14893 / NCIMB 12804 / NRRL 8165 / MA-4680).